We begin with the raw amino-acid sequence, 75 residues long: NECIRKWLSCVDRKNDCCEGLECYKRRHSFEVCVPIPGFCLVKWKQCDGRERDCCAGLECWKRSGNKSSVCAPIT.

Intrachain disulfides connect C3–C18, C10–C23, C17–C33, C40–C55, C47–C60, and C54–C71. 2 Domain repeats span residues 3 to 33 (CIRKWLSCVDRKNDCCEGLECYKRRHSFEVC) and 40 to 71 (CLVKWKQCDGRERDCCAGLECWKRSGNKSSVC). A 2 X approximate repeats with cysteine pattern C-C-CC-C-C region spans residues 3–71 (CIRKWLSCVD…KRSGNKSSVC (69 aa)).

Belongs to the psalmotoxin-1 family. Double-knot toxin subfamily. Expressed by the venom gland.

The protein resides in the secreted. Functionally, this toxin potently and selectively inhibits ASIC1a (IC(50)=0.4 nM on rASIC1a and IC(50)=0.52 nM on hASIC1a), an isoform of the gene ASIC1. It incompletely inhibits ASIC1a activation in a pH-independent and slowly reversible manner (Tau(off)=14.2 minutes for rASIC1a and 31.8 minutes for hASIC1a). This toxin acts by binding to and stabilizing the closed state of the channel, thereby impeding the transition into a conducting state. This toxin may bind to the acidic pocket of ASIC1a, since mutation of a key residue of this pocket (Arg-350) abolishes the ability of the toxin to inhibit ASIC1a. In addition, it shows antiparasitic activities, since it moderately inhibits the larval development of the major pathogenic nematode of ruminants (H.contortus, IC(50)=22.9 uM). In vivo, this toxin protects the brain from neuronal injury when administered up to 8 hours after stroke onset. The sequence is that of Pi-hexatoxin-Hi1a from Hadronyche infensa (Fraser island funnel-web spider).